The chain runs to 302 residues: Nucleotide-binding protein Bcep1808_2900 (302 aa).

8 to 15 is a binding site for ATP; the sequence is GISGSGKS. 57 to 60 is a GTP binding site; it reads DARS.

This sequence belongs to the RapZ-like family.

Functionally, displays ATPase and GTPase activities. This Burkholderia vietnamiensis (strain G4 / LMG 22486) (Burkholderia cepacia (strain R1808)) protein is Nucleotide-binding protein Bcep1808_2900.